Consider the following 157-residue polypeptide: Protein Smg homolog (157 aa).

Belongs to the Smg family.

This chain is Protein Smg homolog, found in Shewanella sediminis (strain HAW-EB3).